The chain runs to 130 residues: Small ribosomal subunit protein uS8B (130 aa).

Belongs to the universal ribosomal protein uS8 family.

This Drosophila melanogaster (Fruit fly) protein is Small ribosomal subunit protein uS8B (RpS15Ab).